Here is a 311-residue protein sequence, read N- to C-terminus: Aquaporin-1 (311 aa).

Topologically, residues 1-16 (MHPQVASLFDNVYEDL) are cytoplasmic. Residues 17–37 (AAATLEFIGTAFFLLFGLGGI) traverse the membrane as a helical segment. The Extracellular segment spans residues 38–56 (QASTAEDTASSQPPASGIE). The chain crosses the membrane as a helical span at residues 57–77 (HVLYISTCMGFSLVVSAWLFF). Position 78 (R78) is a topological domain, cytoplasmic. Residues 79–99 (VTGGLFNPNISFALLLVGGLK) form a helical membrane-spanning segment. The NPA 1 motif lies at 85-87 (NPN). P100 is a topological domain (extracellular). The helical transmembrane segment at 101-121 (LRFVLFCIAQLTGAIAGAAIV) threads the bilayer. At 122 to 143 (RGLTSAPLSVNNVLQQGTSAAQ) the chain is on the cytoplasmic side. Residues 144-164 (GVFIEMFITAALVLSVLMLAA) traverse the membrane as a helical segment. The Extracellular segment spans residues 165–168 (EKHE). Residues 169 to 189 (ATPFAPVGIGLTLFACHLFAV) traverse the membrane as a helical segment. Residues 190 to 215 (YYTGAAMNSARAFGPAVISGFPEPQH) are Cytoplasmic-facing. Positions 197 to 199 (NSA) match the NPA 2 motif. A helical membrane pass occupies residues 216-236 (WVYWVGPFLGSLLGAGFYATL). The Extracellular segment spans residues 237-311 (KHYKYWRLNP…TSSRTNFSPV (75 aa)). Residues 276–311 (DEETRNGCASNEEGVRATGDEKSSNATSSRTNFSPV) are disordered. Residues 288–298 (EGVRATGDEKS) are compositionally biased toward basic and acidic residues. Polar residues predominate over residues 299–311 (SNATSSRTNFSPV). The N-linked (GlcNAc...) asparagine glycan is linked to N300.

It belongs to the MIP/aquaporin (TC 1.A.8) family.

It is found in the cell membrane. The catalysed reaction is H2O(in) = H2O(out). The enzyme catalyses H2O2(out) = H2O2(in). It carries out the reaction nitric oxide(out) = nitric oxide(in). It catalyses the reaction CO2(out) = CO2(in). Its function is as follows. Water channel required to facilitate the transport of water across membranes. Also mediates the transport nitric oxide, hydrogen peroxide and carbon dioxide across the membrane. Required for Hartig net development in trembling aspen trees. Contributes in fungal cellular processes during the basidiocarp formation. In Laccaria bicolor (Bicoloured deceiver), this protein is Aquaporin-1.